A 439-amino-acid polypeptide reads, in one-letter code: GlutamylGlutaminyl-tRNA synthetase (439 aa).

A 'HIGH' region motif is present at residues proline 6–asparagine 16. The 'KMSKS' region signature appears at lysine 232–arginine 236. Lysine 235 serves as a coordination point for ATP.

It belongs to the class-I aminoacyl-tRNA synthetase family. Glutamate--tRNA ligase type 1 subfamily. As to quaternary structure, monomer.

The protein resides in the cytoplasm. It carries out the reaction tRNA(Glu) + L-glutamate + ATP = L-glutamyl-tRNA(Gln) + AMP + diphosphate. Functionally, aminoacylates tRNA(Gln) with glutamate. Does not aminoacylate tRNA(Glu). This chain is GlutamylGlutaminyl-tRNA synthetase (gltX2), found in Helicobacter pylori (strain ATCC 700392 / 26695) (Campylobacter pylori).